A 76-amino-acid polypeptide reads, in one-letter code: Small proline-rich protein 2G (76 aa).

Repeat copies occupy residues 21–29 (PKCPEPCPL), 30–38 (PKCPEPCPP), and 39–47 (PKCPEPCPE). The 3 X 9 AA approximate tandem repeats stretch occupies residues 21–47 (PKCPEPCPLPKCPEPCPPPKCPEPCPE). The interval 55–76 (QQKCPPVQTPPPCQQKCPPKSK) is disordered.

This sequence belongs to the cornifin (SPRR) family. Expressed in uterus.

The protein resides in the cytoplasm. Cross-linked envelope protein of keratinocytes. It is a keratinocyte protein that first appears in the cell cytosol, but ultimately becomes cross-linked to membrane proteins by transglutaminase. All that results in the formation of an insoluble envelope beneath the plasma membrane. In Mus musculus (Mouse), this protein is Small proline-rich protein 2G (Sprr2g).